Consider the following 470-residue polypeptide: Pyruvate kinase I (470 aa).

Arg-32 is a binding site for substrate. K(+)-binding residues include Asn-34, Ser-36, Asp-66, and Thr-67. 34–37 is a binding site for ATP; that stretch reads NFSH. Residue Arg-73 coordinates ATP. N6-acetyllysine is present on Lys-76. Lys-156 serves as a coordination point for ATP. Mg(2+) is bound at residue Glu-222. The substrate site is built by Gly-245, Asp-246, and Thr-278. Asp-246 contacts Mg(2+). An N6-acetyllysine modification is found at Lys-319.

This sequence belongs to the pyruvate kinase family. Homotetramer. Mg(2+) is required as a cofactor. Requires K(+) as cofactor.

The enzyme catalyses pyruvate + ATP = phosphoenolpyruvate + ADP + H(+). The protein operates within carbohydrate degradation; glycolysis; pyruvate from D-glyceraldehyde 3-phosphate: step 5/5. The chain is Pyruvate kinase I (pykF) from Escherichia coli O157:H7.